The primary structure comprises 100 residues: Suppressor of silencing 2b (100 aa).

The Nuclear localization signal signature appears at 22 to 27; that stretch reads KRRRRR.

Belongs to the cucumovirus/ilarvirus protein 2b family. Homotetramer. Interacts with host AGO1; this interaction blocks AGO1 cleavage activity to attenuate RNA silencing and thus counter host defense. Interacts with host JAZ.

Its subcellular location is the host nucleus. Multifunctional protein that plays two independent roles: viral suppressor of host RNAi (VSR) and viral inducer of host attractiveness to insect vectors (VIA). Acts as a suppressor of RNA-mediated gene silencing, also known as post-transcriptional gene silencing (PTGS), a mechanism of plant viral defense that limits the accumulation of viral RNAs. May directly interfere with mobile silencing signaling. Also inhibits signal transduction by the phytohormone jasmonate, making the infected plant more attractive to aphids, which are the second host to play a role as a dissemination vector. Acts by binding to and inhibiting JAZ degradation in the host. This chain is Suppressor of silencing 2b, found in Cucumis sativus (Cucumber).